Here is a 272-residue protein sequence, read N- to C-terminus: Putative bark agglutinin LECRPA3 (272 aa).

Residues 1–29 (PFNPETVYALLAMLISFFVLLASARKENS) form the signal peptide. Residues Asn36, Asn39, and Asn65 are each glycosylated (N-linked (GlcNAc...) asparagine). Mn(2+) contacts are provided by Glu150 and Asp152. The Ca(2+) site is built by Asp152, Tyr154, Asn156, and Asp159. Mn(2+) contacts are provided by Asp159 and His164.

The protein belongs to the leguminous lectin family. As to quaternary structure, homotetramer. Weak expression in bark. The lectin accumulates in the inner bark in autumn.

Functionally, bark lectins are storage proteins that probably maintain stocks of nitrogen during dormant period. Self-aggregatable molecules that can bind their own carbohydrate side chains. They could also play a role in the plant's defense against phytophagous invertebrates or herbivorous higher animals. This is Putative bark agglutinin LECRPA3 from Robinia pseudoacacia (Black locust).